The following is a 459-amino-acid chain: Cysteine--tRNA ligase (459 aa).

C27 lines the Zn(2+) pocket. The 'HIGH' region motif lies at 29-39; that stretch reads PTVYNFVHIGN. Zn(2+)-binding residues include C211, H236, and E240. The 'KMSKS' region motif lies at 269 to 273; it reads KMSKS. K272 serves as a coordination point for ATP.

This sequence belongs to the class-I aminoacyl-tRNA synthetase family. As to quaternary structure, monomer. Zn(2+) serves as cofactor.

The protein resides in the cytoplasm. The catalysed reaction is tRNA(Cys) + L-cysteine + ATP = L-cysteinyl-tRNA(Cys) + AMP + diphosphate. This Ehrlichia canis (strain Jake) protein is Cysteine--tRNA ligase.